Here is a 360-residue protein sequence, read N- to C-terminus: NADP-dependent alcohol dehydrogenase 6 (360 aa).

C46 serves as a coordination point for Zn(2+). NADP(+) contacts are provided by G47 and H51. Zn(2+)-binding residues include H68, C100, C103, C106, and C114. S131 is subject to Phosphoserine. Residue C163 participates in Zn(2+) binding. 16 residues coordinate NADP(+): L188, G190, I191, S210, R211, K215, C250, S252, T255, D256, I275, I277, Y298, S299, L301, and R348. S359 carries the phosphoserine modification.

It belongs to the zinc-containing alcohol dehydrogenase family. As to quaternary structure, homodimer. It depends on Zn(2+) as a cofactor.

It is found in the cytoplasm. It localises to the nucleus. The enzyme catalyses a primary alcohol + NADP(+) = an aldehyde + NADPH + H(+). It catalyses the reaction (E)-cinnamyl alcohol + NADP(+) = (E)-cinnamaldehyde + NADPH + H(+). It carries out the reaction hexan-1-ol + NADP(+) = hexanal + NADPH + H(+). The catalysed reaction is 3-methylbutanol + NADP(+) = 3-methylbutanal + NADPH + H(+). The enzyme catalyses S-nitroso-CoA + NADPH + H(+) = sulfinamide-CoA + NADP(+). NADP-dependent, medium-chain alcohol dehydrogenase with a broad substrate specificity. Aldehydes exhibited 50-12000 times higher catalytic efficiency than the corresponding alcohols, therefore the major function of the enzyme is as an aldehyde reductase. The enzyme is active towards aromatic and aliphatic (linear and branched-chain) aldehydes. The enzyme is very active towards aromatic aldehydes, such as cinnamaldehyde, benzaldehyde and substituted benzaldehydes, such as veratraldehyde and panisaldehyde. It exhibits low activity towards substituted cinnamaldehydes, such as coniferaldehyde and sinapaldehyde. The enzyme has no activity with ketones, such as acetone or cyclohexanone. For the reverse reaction, linear and branched-chain primary alcohols are substrates, whereas very low activity is found with secondary alcohols, such as butan-2-ol. The enzyme may be physiologically involved in several steps of the lignin degradation pathway, initiated by other microorganisms, in the synthesis of fusel alcohols, products derived from the aminoacidic metabolism, and in the homeostasis of NADP(H). Has the ability to reduce 5-hydroxymethyl furfural (HMF), a furan derivative which is formed during the hydrolysis of lignocellulosic materials, to 5-hydroxymethylfurfuryl alcohol, thereby alleviating the inhibition of the fermentation of lignocellulose hydrolysates by HMF during fuel ethanol production. Also acts as an inhibitor of protein S-nitrosylation by mediating degradation of S-nitroso-coenzyme A (S-nitroso-CoA), a cofactor required to S-nitrosylate proteins. The protein is NADP-dependent alcohol dehydrogenase 6 of Saccharomyces cerevisiae (strain ATCC 204508 / S288c) (Baker's yeast).